A 261-amino-acid polypeptide reads, in one-letter code: Carbonic anhydrase 1 (261 aa).

Residue Ala-2 is modified to N-acetylalanine. Positions 4 to 261 (PDWGYDGENG…LNGRTVKASF (258 aa)) constitute an Alpha-carbonic anhydrase domain. His-65 serves as the catalytic Proton donor/acceptor. His-95, His-97, and His-120 together coordinate Zn(2+). Residues Thr-200 and 200–201 (TH) contribute to the substrate site.

This sequence belongs to the alpha-carbonic anhydrase family. It depends on Zn(2+) as a cofactor.

The protein resides in the cytoplasm. It carries out the reaction hydrogencarbonate + H(+) = CO2 + H2O. The enzyme catalyses urea = cyanamide + H2O. Inhibited by acetazolamide. Functionally, catalyzes the reversible hydration of carbon dioxide. Can hydrate cyanamide to urea. This Bos taurus (Bovine) protein is Carbonic anhydrase 1 (CA1).